Consider the following 339-residue polypeptide: Ketol-acid reductoisomerase (NADP(+)) (339 aa).

Residues 1–182 (MRVYYDRDAD…GGGRSGIIET (182 aa)) form the KARI N-terminal Rossmann domain. Residues 24–27 (YGSQ), Lys48, Ser51, Thr53, and 83–86 (DELQ) contribute to the NADP(+) site. His108 is an active-site residue. Gly134 lines the NADP(+) pocket. The KARI C-terminal knotted domain maps to 183–328 (NFREECETDL…AKLRGMMPWI (146 aa)). The Mg(2+) site is built by Asp191, Glu195, Glu227, and Glu231. Ser252 lines the substrate pocket.

This sequence belongs to the ketol-acid reductoisomerase family. Requires Mg(2+) as cofactor.

The catalysed reaction is (2R)-2,3-dihydroxy-3-methylbutanoate + NADP(+) = (2S)-2-acetolactate + NADPH + H(+). The enzyme catalyses (2R,3R)-2,3-dihydroxy-3-methylpentanoate + NADP(+) = (S)-2-ethyl-2-hydroxy-3-oxobutanoate + NADPH + H(+). It participates in amino-acid biosynthesis; L-isoleucine biosynthesis; L-isoleucine from 2-oxobutanoate: step 2/4. Its pathway is amino-acid biosynthesis; L-valine biosynthesis; L-valine from pyruvate: step 2/4. In terms of biological role, involved in the biosynthesis of branched-chain amino acids (BCAA). Catalyzes an alkyl-migration followed by a ketol-acid reduction of (S)-2-acetolactate (S2AL) to yield (R)-2,3-dihydroxy-isovalerate. In the isomerase reaction, S2AL is rearranged via a Mg-dependent methyl migration to produce 3-hydroxy-3-methyl-2-ketobutyrate (HMKB). In the reductase reaction, this 2-ketoacid undergoes a metal-dependent reduction by NADPH to yield (R)-2,3-dihydroxy-isovalerate. This Rhizobium etli (strain ATCC 51251 / DSM 11541 / JCM 21823 / NBRC 15573 / CFN 42) protein is Ketol-acid reductoisomerase (NADP(+)).